A 693-amino-acid chain; its full sequence is Polyribonucleotide nucleotidyltransferase (693 aa).

Aspartate 489 and aspartate 495 together coordinate Mg(2+). The region spanning proline 556–isoleucine 615 is the KH domain. One can recognise an S1 motif domain in the interval glycine 625–arginine 693.

This sequence belongs to the polyribonucleotide nucleotidyltransferase family. In terms of assembly, component of the RNA degradosome, which is a multiprotein complex involved in RNA processing and mRNA degradation. It depends on Mg(2+) as a cofactor.

It localises to the cytoplasm. It catalyses the reaction RNA(n+1) + phosphate = RNA(n) + a ribonucleoside 5'-diphosphate. Its function is as follows. Involved in mRNA degradation. Catalyzes the phosphorolysis of single-stranded polyribonucleotides processively in the 3'- to 5'-direction. The protein is Polyribonucleotide nucleotidyltransferase of Francisella tularensis subsp. tularensis (strain WY96-3418).